Consider the following 209-residue polypeptide: Phosphopantothenoylcysteine decarboxylase (209 aa).

Residues 28-30 and 53-55 contribute to the FMN site; these read GSV and TKS. The active-site Proton donor is H90. FMN contacts are provided by residues 106 to 109 and A140; that span reads SANT. N-[(R)-4-phosphopantothenoyl]-L-cysteine contacts are provided by N142, R172, and A174. The active-site Proton donor is the C175. M183 is an N-[(R)-4-phosphopantothenoyl]-L-cysteine binding site.

This sequence belongs to the HFCD (homooligomeric flavin containing Cys decarboxylase) superfamily. As to quaternary structure, homotrimer. It depends on FMN as a cofactor. In terms of tissue distribution, expressed in roots, shoots, leaves, flowers, developing siliques and seeds with highest expression in seed embryos and phloem.

The enzyme catalyses N-[(R)-4-phosphopantothenoyl]-L-cysteine + H(+) = (R)-4'-phosphopantetheine + CO2. Its pathway is cofactor biosynthesis; coenzyme A biosynthesis; CoA from (R)-pantothenate: step 3/5. Involved in plant growth, and salt and osmotic tolerance. Catalyzes the decarboxylation of 4'-phosphopantothenoylcysteine to 4'-phosphopantetheine, a key step in coenzyme A biosynthesis. The enzyme is also able to decarboxylate pantothenoylcysteine to pantothenoylcysteamine. This chain is Phosphopantothenoylcysteine decarboxylase, found in Arabidopsis thaliana (Mouse-ear cress).